A 408-amino-acid polypeptide reads, in one-letter code: Phosphoglycerate kinase (408 aa).

Residues 24-26, Arg-39, 62-65, Arg-121, and Arg-161 contribute to the substrate site; these read DLN and HLGR. Residues Lys-211, Gly-307, Glu-338, and 364 to 367 each bind ATP; that span reads GGDS.

Belongs to the phosphoglycerate kinase family. As to quaternary structure, monomer.

It is found in the cytoplasm. It catalyses the reaction (2R)-3-phosphoglycerate + ATP = (2R)-3-phospho-glyceroyl phosphate + ADP. Its pathway is carbohydrate degradation; glycolysis; pyruvate from D-glyceraldehyde 3-phosphate: step 2/5. This Pseudarthrobacter chlorophenolicus (strain ATCC 700700 / DSM 12829 / CIP 107037 / JCM 12360 / KCTC 9906 / NCIMB 13794 / A6) (Arthrobacter chlorophenolicus) protein is Phosphoglycerate kinase.